The following is a 269-amino-acid chain: 2-heptyl-3-hydroxy-4(1H)-quinolone dioxygenase (269 aa).

Histidine 97 provides a ligand contact to substrate. The active-site Proton donor/acceptor is histidine 246.

Belongs to the AB hydrolase superfamily. As to quaternary structure, monomer.

The enzyme catalyses 2-heptyl-3-hydroxy-4(1H)-quinolone + O2 = N-octanoylanthranilate + CO + H(+). Its function is as follows. Ring-cleaving dioxygenase involved in the degradation pathway of the Pseudomonas aeruginosa quorum sensing signal molecules HHQ (2-heptyl-4-quinolone) and PQS (2-heptyl-3-hydroxy-4(1H)-quinolone) to anthranilate. Catalyzes the cleavage of PQS to form N-octanoylanthranilate and carbon monoxide. Thus, leads to the inactivation of PQS that plays a central role in the regulation of virulence factor production by P.aeruginosa, thereby quenching the production of antimicrobials, which may contribute to the competitiveness of M.abscessus in presence of P.aeruginosa. In vitro, can also use other 2-alkyl-3-hydroxy-4(1H)-quinolone (AHQ) substrates with shorter alkyl substituents at C2, but with lower efficiency. This is 2-heptyl-3-hydroxy-4(1H)-quinolone dioxygenase from Mycobacteroides abscessus (strain ATCC 19977 / DSM 44196 / CCUG 20993 / CIP 104536 / JCM 13569 / NCTC 13031 / TMC 1543 / L948) (Mycobacterium abscessus).